We begin with the raw amino-acid sequence, 485 residues long: Glycogen synthase (485 aa).

Lys-15 lines the ADP-alpha-D-glucose pocket.

The protein belongs to the glycosyltransferase 1 family. Bacterial/plant glycogen synthase subfamily.

The enzyme catalyses [(1-&gt;4)-alpha-D-glucosyl](n) + ADP-alpha-D-glucose = [(1-&gt;4)-alpha-D-glucosyl](n+1) + ADP + H(+). The protein operates within glycan biosynthesis; glycogen biosynthesis. Synthesizes alpha-1,4-glucan chains using ADP-glucose. The chain is Glycogen synthase from Fervidobacterium nodosum (strain ATCC 35602 / DSM 5306 / Rt17-B1).